The primary structure comprises 177 residues: Transcription antitermination protein NusB (177 aa).

The interval 1-35 (MTDSTHPTPSARPPRQPRTGTTGTGARKAGSKSGR) is disordered. Positions 17–28 (PRTGTTGTGARK) are enriched in low complexity.

Belongs to the NusB family.

Functionally, involved in transcription antitermination. Required for transcription of ribosomal RNA (rRNA) genes. Binds specifically to the boxA antiterminator sequence of the ribosomal RNA (rrn) operons. This chain is Transcription antitermination protein NusB, found in Acidovorax sp. (strain JS42).